The sequence spans 251 residues: uncharacterized protein (251 aa).

The first 18 residues, 1 to 18 (MRILIILSIILCSLSIRA), serve as a signal peptide directing secretion.

This sequence belongs to the MlaA family.

This is an uncharacterized protein from Rickettsia conorii (strain ATCC VR-613 / Malish 7).